Here is a 521-residue protein sequence, read N- to C-terminus: UDP-N-acetylmuramate--L-alanine ligase (521 aa).

136–142 serves as a coordination point for ATP; sequence GAHGKTT.

The protein belongs to the MurCDEF family.

The protein resides in the cytoplasm. The enzyme catalyses UDP-N-acetyl-alpha-D-muramate + L-alanine + ATP = UDP-N-acetyl-alpha-D-muramoyl-L-alanine + ADP + phosphate + H(+). It participates in cell wall biogenesis; peptidoglycan biosynthesis. Cell wall formation. The chain is UDP-N-acetylmuramate--L-alanine ligase from Bifidobacterium adolescentis (strain ATCC 15703 / DSM 20083 / NCTC 11814 / E194a).